A 156-amino-acid polypeptide reads, in one-letter code: ATP synthase subunit b (156 aa).

Residues 7-29 (LFAQMVVFLVLAWFTMKFVWPPL) form a helical membrane-spanning segment.

Belongs to the ATPase B chain family. As to quaternary structure, F-type ATPases have 2 components, F(1) - the catalytic core - and F(0) - the membrane proton channel. F(1) has five subunits: alpha(3), beta(3), gamma(1), delta(1), epsilon(1). F(0) has three main subunits: a(1), b(2) and c(10-14). The alpha and beta chains form an alternating ring which encloses part of the gamma chain. F(1) is attached to F(0) by a central stalk formed by the gamma and epsilon chains, while a peripheral stalk is formed by the delta and b chains.

The protein localises to the cell inner membrane. In terms of biological role, f(1)F(0) ATP synthase produces ATP from ADP in the presence of a proton or sodium gradient. F-type ATPases consist of two structural domains, F(1) containing the extramembraneous catalytic core and F(0) containing the membrane proton channel, linked together by a central stalk and a peripheral stalk. During catalysis, ATP synthesis in the catalytic domain of F(1) is coupled via a rotary mechanism of the central stalk subunits to proton translocation. Component of the F(0) channel, it forms part of the peripheral stalk, linking F(1) to F(0). This Burkholderia cenocepacia (strain ATCC BAA-245 / DSM 16553 / LMG 16656 / NCTC 13227 / J2315 / CF5610) (Burkholderia cepacia (strain J2315)) protein is ATP synthase subunit b.